Here is a 667-residue protein sequence, read N- to C-terminus: Protein MAIN-LIKE 2 (667 aa).

Position 1 is an N-acetylmethionine (methionine 1). Over residues 492-508 (MRGKERVRRKGMGKRRK) the composition is skewed to basic residues. Disordered regions lie at residues 492–523 (MRGK…EDES) and 594–667 (KLQE…TVVA). A compositionally biased stretch (acidic residues) spans 512–523 (PMEDYGGSEDES). Composition is skewed to basic and acidic residues over residues 608 to 618 (YDVKKEDKESK) and 656 to 667 (SLDRRGENTVVA).

As to expression, expressed in root tips, the shoot apical meristem (SAM), leaves, mature flowers and embryos.

Its subcellular location is the nucleus. Its function is as follows. Maybe required to maintain cell division activity in meristematic cells. The sequence is that of Protein MAIN-LIKE 2 from Arabidopsis thaliana (Mouse-ear cress).